Reading from the N-terminus, the 833-residue chain is Serine/threonine-protein phosphatase 4 regulatory subunit 3A (833 aa).

The WH1 domain maps to 1 to 100 (MTDTRRRVKV…DEIWEKICQV (100 aa)). Phosphoserine occurs at positions 117 and 127. Position 655 is an N6-acetyllysine (lysine 655). Acidic residues predominate over residues 683–694 (FNTDEDDMEDGE). 2 disordered regions span residues 683–712 (FNTD…IMDP) and 733–833 (KTNL…KFDS). 7 positions are modified to phosphoserine: serine 698, serine 741, serine 768, serine 771, serine 774, serine 777, and serine 780. The segment covering 734 to 751 (TNLSGRQSPSFKLSLSSG) has biased composition (polar residues). Residues 752 to 768 (TKTNLTSQSSTTNLPGS) show a composition bias toward low complexity. Polar residues predominate over residues 785 to 794 (PKNTSQTAAI). A compositionally biased stretch (acidic residues) spans 806–820 (YPDDDEDDDEDEDKE).

It belongs to the SMEK family. Serine/threonine-protein phosphatase 4 (PP4) occurs in different assemblies of the catalytic and one or more regulatory subunits. Component of the PP4 complex PPP4C-PPP4R2-PPP4R3A. Interacts with PPP4C; the interaction requires PPP4R2.

The protein localises to the cytoplasm. The protein resides in the cytoskeleton. It is found in the microtubule organizing center. Its subcellular location is the centrosome. It localises to the nucleus. Its function is as follows. Regulatory subunit of serine/threonine-protein phosphatase 4. May regulate the activity of PPP4C at centrosomal microtubule organizing centers. The PPP4C-PPP4R2-PPP4R3A PP4 complex specifically dephosphorylates H2AX phosphorylated on 'Ser-140' (gamma-H2AX) generated during DNA replication and required for DNA DSB repair. This Homo sapiens (Human) protein is Serine/threonine-protein phosphatase 4 regulatory subunit 3A.